The primary structure comprises 766 residues: FYVE, RhoGEF and PH domain-containing protein 4 (766 aa).

The tract at residues 1 to 150 is actin filament-binding; it reads MEESNPAPTS…SSVTNSHDEN (150 aa). Composition is skewed to polar residues over residues 43–65, 132–145, and 152–161; these read STMN…TPQK, RNET…SVTN, and CDSSCRTQGT. A disordered region spans residues 43–167; the sequence is STMNLNIPQT…TQGTDLGLPS (125 aa). A DH domain is found at 206-393; it reads KLHKIATELL…STAASHSNSA (188 aa). Residues 422 to 521 form the PH 1 domain; that stretch reads ELIKEGQILK…WIKALQESID (100 aa). An FYVE-type zinc finger spans residues 559–619; that stretch reads DNEVTMCMKC…VCKDCYQIMS (61 aa). The Zn(2+) site is built by Cys565, Cys568, Cys582, Cys585, Cys590, Cys593, Cys611, and Cys614. The PH 2 domain maps to 643–740; sequence NSEVCSFLQY…WLKIILLAVT (98 aa). Phosphoserine is present on residues Ser702 and Ser716. Positions 745–766 are disordered; the sequence is DGPSEHLDTLDNLPGPKEKSEC.

Homooligomer. Detected in brain, lung, liver, skeletal muscle, kidney, testis and cultured hippocampal neurons.

The protein resides in the cytoplasm. It is found in the cytoskeleton. The protein localises to the cell projection. Its subcellular location is the filopodium. Its function is as follows. Activates CDC42, a member of the Ras-like family of Rho- and Rac proteins, by exchanging bound GDP for free GTP. Plays a role in regulating the actin cytoskeleton and cell shape. Activates MAPK8. The chain is FYVE, RhoGEF and PH domain-containing protein 4 (Fgd4) from Rattus norvegicus (Rat).